Consider the following 151-residue polypeptide: UPF0208 membrane protein YfbV (151 aa).

2 helical membrane passes run 46–65 (YAIR…QIAL) and 69–91 (LGPA…WWLG).

Belongs to the UPF0208 family.

The protein localises to the cell inner membrane. The polypeptide is UPF0208 membrane protein YfbV (Salmonella choleraesuis (strain SC-B67)).